Reading from the N-terminus, the 529-residue chain is E3 ubiquitin-protein ligase arih1 (529 aa).

Disordered regions lie at residues 1–30 and 49–68; these read MDSD…EDDL and GICG…GEEE. A compositionally biased stretch (gly residues) spans 51 to 64; the sequence is CGEGGGSALGPGPG. The interval 77–125 is UBA-like; it reads TAEQILQHMVECIREVNEVIQNPATITRILLSHFNWDKEKLMERYFDGN. The interval 154–365 is TRIAD supradomain; the sequence is QDMPCQICYL…SAWYNCNRYN (212 aa). 18 residues coordinate Zn(2+): C158, C161, C175, H177, C180, C183, C203, C208, C248, C253, C269, C271, C276, C279, H284, C289, C316, and C319. The RING-type 1 zinc finger occupies 158–208; the sequence is CQICYLNYPNSYFTGLECGHKFCMQCWSEYLTTKIIEEGMGQTISCPAHGC. The IBR-type zinc finger occupies 228 to 289; it reads LKYQHLITNS…GENWHDPVKC (62 aa). The RING-type 2; atypical zinc-finger motif lies at 316-347; that stretch reads CPKCHVTIEKDGGCNHMVCRNQNCKAEFCWVC. The active site involves C329. Positions 334, 339, 344, 347, 354, and 361 each coordinate Zn(2+). The ariadne domain stretch occupies residues 380-529; that stretch reads RAALQRYLFY…EKDLWEYIED (150 aa).

Belongs to the RBR family. Ariadne subfamily. Interacts (via the first RING-type zinc finger) with ube2l3. Associates with cullin-RING ubiquitin ligase (CRL) complexes containing neddylated cullin.

The protein localises to the cytoplasm. It localises to the nucleus. The catalysed reaction is [E2 ubiquitin-conjugating enzyme]-S-ubiquitinyl-L-cysteine + [acceptor protein]-L-lysine = [E2 ubiquitin-conjugating enzyme]-L-cysteine + [acceptor protein]-N(6)-ubiquitinyl-L-lysine.. It functions in the pathway protein modification; protein ubiquitination. Its activity is regulated as follows. Autoinhibited by the ariadne domain, which masks the second RING-type zinc finger that contains the active site and inhibits the E3 activity. Inhibition is relieved upon binding to neddylated cullin-RING ubiquitin ligase complexes, which activate the E3 ligase activity of ARIH1. Functionally, E3 ubiquitin-protein ligase, which catalyzes ubiquitination of target proteins together with ubiquitin-conjugating enzyme E2 ube2l3. Acts as an atypical E3 ubiquitin-protein ligase by working together with cullin-RING ubiquitin ligase (CRL) complexes and initiating ubiquitination of CRL substrates: associates with CRL complexes and specifically mediates addition of the first ubiquitin on CRLs targets. The initial ubiquitin is then elongated. E3 ubiquitin-protein ligase activity is activated upon binding to neddylated cullin-RING ubiquitin ligase complexes. The sequence is that of E3 ubiquitin-protein ligase arih1 (arih1) from Xenopus tropicalis (Western clawed frog).